The chain runs to 118 residues: Beta-elicitin cryptogein (118 aa).

The signal sequence occupies residues 1-20 (MNFTALLAAVAAALVGSANA). 3 cysteine pairs are disulfide-bonded: Cys23–Cys91, Cys47–Cys76, and Cys71–Cys115.

This sequence belongs to the elicitin family.

It is found in the secreted. Its function is as follows. Induces local and distal defense responses (incompatible hypersensitive reaction) in plants from the solanaceae and cruciferae families. Elicits leaf necrosis and causes the accumulation of pathogenesis-related proteins. Might interact with the lipidic molecules of the plasma membrane. This chain is Beta-elicitin cryptogein, found in Phytophthora cryptogea.